The chain runs to 157 residues: Small ribosomal subunit protein uS7 (157 aa).

This sequence belongs to the universal ribosomal protein uS7 family. Part of the 30S ribosomal subunit. Contacts proteins S9 and S11.

In terms of biological role, one of the primary rRNA binding proteins, it binds directly to 16S rRNA where it nucleates assembly of the head domain of the 30S subunit. Is located at the subunit interface close to the decoding center, probably blocks exit of the E-site tRNA. The sequence is that of Small ribosomal subunit protein uS7 from Borrelia duttonii (strain Ly).